The sequence spans 209 residues: 3-demethoxyubiquinol 3-hydroxylase (209 aa).

Glu58, Glu88, His91, Glu140, Glu172, and His175 together coordinate Fe cation.

It belongs to the COQ7 family. Fe cation serves as cofactor.

The protein resides in the cell membrane. It carries out the reaction a 5-methoxy-2-methyl-3-(all-trans-polyprenyl)benzene-1,4-diol + AH2 + O2 = a 3-demethylubiquinol + A + H2O. It functions in the pathway cofactor biosynthesis; ubiquinone biosynthesis. In terms of biological role, catalyzes the hydroxylation of 2-nonaprenyl-3-methyl-6-methoxy-1,4-benzoquinol during ubiquinone biosynthesis. The chain is 3-demethoxyubiquinol 3-hydroxylase from Polynucleobacter asymbioticus (strain DSM 18221 / CIP 109841 / QLW-P1DMWA-1) (Polynucleobacter necessarius subsp. asymbioticus).